Consider the following 268-residue polypeptide: Glucosamine-6-phosphate deaminase (268 aa).

The active-site Proton acceptor; for enolization step is the aspartate 67. The For ring-opening step role is filled by asparagine 137. Histidine 139 functions as the Proton acceptor; for ring-opening step in the catalytic mechanism. Glutamate 144 serves as the catalytic For ring-opening step.

This sequence belongs to the glucosamine/galactosamine-6-phosphate isomerase family. NagB subfamily. As to quaternary structure, homohexamer.

The enzyme catalyses alpha-D-glucosamine 6-phosphate + H2O = beta-D-fructose 6-phosphate + NH4(+). It participates in amino-sugar metabolism; N-acetylneuraminate degradation; D-fructose 6-phosphate from N-acetylneuraminate: step 5/5. Catalyzes the reversible isomerization-deamination of glucosamine 6-phosphate (GlcN6P) to form fructose 6-phosphate (Fru6P) and ammonium ion. This Pseudoalteromonas translucida (strain TAC 125) protein is Glucosamine-6-phosphate deaminase.